Here is a 340-residue protein sequence, read N- to C-terminus: Ketol-acid reductoisomerase (NADP(+)) (340 aa).

Residues 2 to 181 (VKMYYEADVK…GCTKAGVIET (180 aa)) enclose the KARI N-terminal Rossmann domain. Residues 25 to 28 (YGSQ), R48, S52, and 82 to 85 (DERQ) each bind NADP(+). H107 is a catalytic residue. Residue G133 coordinates NADP(+). The KARI C-terminal knotted domain maps to 182–327 (SFREETETDL…EQLRGMMSWI (146 aa)). Positions 190, 194, 226, and 230 each coordinate Mg(2+). S251 provides a ligand contact to substrate.

It belongs to the ketol-acid reductoisomerase family. Mg(2+) serves as cofactor.

It catalyses the reaction (2R)-2,3-dihydroxy-3-methylbutanoate + NADP(+) = (2S)-2-acetolactate + NADPH + H(+). It carries out the reaction (2R,3R)-2,3-dihydroxy-3-methylpentanoate + NADP(+) = (S)-2-ethyl-2-hydroxy-3-oxobutanoate + NADPH + H(+). Its pathway is amino-acid biosynthesis; L-isoleucine biosynthesis; L-isoleucine from 2-oxobutanoate: step 2/4. It participates in amino-acid biosynthesis; L-valine biosynthesis; L-valine from pyruvate: step 2/4. Its function is as follows. Involved in the biosynthesis of branched-chain amino acids (BCAA). Catalyzes an alkyl-migration followed by a ketol-acid reduction of (S)-2-acetolactate (S2AL) to yield (R)-2,3-dihydroxy-isovalerate. In the isomerase reaction, S2AL is rearranged via a Mg-dependent methyl migration to produce 3-hydroxy-3-methyl-2-ketobutyrate (HMKB). In the reductase reaction, this 2-ketoacid undergoes a metal-dependent reduction by NADPH to yield (R)-2,3-dihydroxy-isovalerate. This chain is Ketol-acid reductoisomerase (NADP(+)), found in Brevibacillus brevis (strain 47 / JCM 6285 / NBRC 100599).